Here is a 181-residue protein sequence, read N- to C-terminus: Protein canopy homolog 1 (181 aa).

The first 21 residues, 1 to 21, serve as a signal peptide directing secretion; the sequence is MAILLHFGVLITAFLSSHVEG. Residues 25–177 form the Saposin B-type domain; that stretch reads PILYCGACRA…EETGLCKEYL (153 aa). Intrachain disulfides connect Cys-29–Cys-173, Cys-32–Cys-166, and Cys-87–Cys-139. The Prevents secretion from ER signature appears at 178–181; it reads HNEL.

The protein belongs to the canopy family.

The protein resides in the endoplasmic reticulum. Plays an role in early embryonic development. This is Protein canopy homolog 1 (cnpy1) from Xenopus laevis (African clawed frog).